Here is a 144-residue protein sequence, read N- to C-terminus: Large ribosomal subunit protein uL16 (144 aa).

Positions 1–17 (MLQPKKTKFRRQQKGRA) are enriched in basic residues. The interval 1–22 (MLQPKKTKFRRQQKGRAKGNAQ) is disordered.

Belongs to the universal ribosomal protein uL16 family. Part of the 50S ribosomal subunit.

Functionally, binds 23S rRNA and is also seen to make contacts with the A and possibly P site tRNAs. This is Large ribosomal subunit protein uL16 from Bacteroides thetaiotaomicron (strain ATCC 29148 / DSM 2079 / JCM 5827 / CCUG 10774 / NCTC 10582 / VPI-5482 / E50).